Consider the following 338-residue polypeptide: Ankyrin-repeat domain containing transcription coregulator asaA (338 aa).

The span at 1–10 (MGAPHEEIQA) shows a compositional bias: basic and acidic residues. Disordered regions lie at residues 1–70 (MGAP…LRST) and 112–137 (ASSV…PFID). A compositionally biased stretch (basic residues) spans 11–33 (LKRRREQNRLAQRRRRDNVRRRL). Residues 42–70 (SPASASQTSLCSSTDSRVTLNPHQSLRST) show a composition bias toward polar residues. Low complexity predominate over residues 112-130 (ASSVSPSSSAGPLSSSPSP). ANK repeat units follow at residues 235–264 (RWTT…DPNA), 268–297 (EGAT…DPTL), and 301–330 (AGWL…PVDY).

It functions in the pathway secondary metabolite biosynthesis. In terms of biological role, transcription coregulator involved in regulation of gene cluster that mediates the biosynthesis of aspergillic acid, a hydroxamic acid-containing pyrazinone with aliphatic side chains that originates from leucine (Leu) and isoleucine (Ile). Aspergillic acid has antibiotic properties and was shown to be lethal to mice. This is Ankyrin-repeat domain containing transcription coregulator asaA from Aspergillus flavus (strain ATCC 200026 / FGSC A1120 / IAM 13836 / NRRL 3357 / JCM 12722 / SRRC 167).